Reading from the N-terminus, the 925-residue chain is Neuronal PAS domain-containing protein 3 (925 aa).

A bHLH domain is found at Leu58–Arg111. Positions Lys60–Arg71 are DNA-binding. Disordered regions lie at residues Pro119–Gln138 and Leu219–Leu257. One can recognise a PAS 1 domain in the interval Glu152–Gly222. Over residues Ala234–Ser256 the composition is skewed to low complexity. One can recognise a PAS 2 domain in the interval Pro324 to Gly394. The 44-residue stretch at Thr398–Pro441 folds into the PAC domain. Disordered regions lie at residues Pro457–Leu555, Pro576–His645, and Asn664–Asn774. Basic and acidic residues-rich tracts occupy residues Glu484–Asn493 and Asp529–Glu549. Basic residues predominate over residues Lys601–Leu622. Positions Asn680 to Pro690 are enriched in polar residues. 2 stretches are compositionally biased toward gly residues: residues Gly700–Ala710 and Gly760–Gly771.

In terms of assembly, efficient DNA binding requires dimerization with another bHLH protein. Interacts with ARNT; forms a heterodimer that binds core DNA sequence 5'-[AG]CGTG-3' within the hypoxia response element (HRE) of target gene promoters. In terms of tissue distribution, detected exclusively in adult brain in inhibitory interneurons.

The protein resides in the nucleus. May play a broad role in neurogenesis. May control regulatory pathways relevant to schizophrenia and to psychotic illness. This Mus musculus (Mouse) protein is Neuronal PAS domain-containing protein 3 (Npas3).